Consider the following 199-residue polypeptide: Recombination protein RecR (199 aa).

The C4-type zinc-finger motif lies at 58–73 (CQRCFHLSSEDLCNIC). The Toprim domain maps to 81–175 (QTICVVADPR…RVTRIAFGLP (95 aa)).

It belongs to the RecR family.

In terms of biological role, may play a role in DNA repair. It seems to be involved in an RecBC-independent recombinational process of DNA repair. It may act with RecF and RecO. The sequence is that of Recombination protein RecR from Synechococcus elongatus (strain ATCC 33912 / PCC 7942 / FACHB-805) (Anacystis nidulans R2).